The chain runs to 227 residues: Uracil-DNA glycosylase (227 aa).

D65 serves as the catalytic Proton acceptor.

This sequence belongs to the uracil-DNA glycosylase (UDG) superfamily. UNG family.

It localises to the cytoplasm. The catalysed reaction is Hydrolyzes single-stranded DNA or mismatched double-stranded DNA and polynucleotides, releasing free uracil.. Its function is as follows. Excises uracil residues from the DNA which can arise as a result of misincorporation of dUMP residues by DNA polymerase or due to deamination of cytosine. This is Uracil-DNA glycosylase from Lactobacillus delbrueckii subsp. bulgaricus (strain ATCC BAA-365 / Lb-18).